Reading from the N-terminus, the 252-residue chain is Probable transcriptional regulatory protein Haur_3030 (252 aa).

It belongs to the TACO1 family.

Its subcellular location is the cytoplasm. This chain is Probable transcriptional regulatory protein Haur_3030, found in Herpetosiphon aurantiacus (strain ATCC 23779 / DSM 785 / 114-95).